A 160-amino-acid polypeptide reads, in one-letter code: Peptidyl-prolyl cis-trans isomerase CYP18-1 (160 aa).

The 151-residue stretch at 3–153 (VTLHTNLGDI…AEIRLNRVTI (151 aa)) folds into the PPIase cyclophilin-type domain.

This sequence belongs to the cyclophilin-type PPIase family. In terms of tissue distribution, ubiquitous.

It is found in the cytoplasm. The catalysed reaction is [protein]-peptidylproline (omega=180) = [protein]-peptidylproline (omega=0). Its function is as follows. PPIases accelerate the folding of proteins. It catalyzes the cis-trans isomerization of proline imidic peptide bonds in oligopeptides. The polypeptide is Peptidyl-prolyl cis-trans isomerase CYP18-1 (CYP18-1) (Arabidopsis thaliana (Mouse-ear cress)).